We begin with the raw amino-acid sequence, 498 residues long: Minor fimbrium subunit Mfa1 (498 aa).

An N-terminal signal peptide occupies residues 1 to 19 (MKLNKMFLVGALLSLGFAS). A lipid anchor (N-palmitoyl cysteine) is attached at C20. The S-diacylglycerol cysteine moiety is linked to residue C20. A propeptide spanning residues 20–50 (CSKEGNGPAPDSSSTADTHMSVSMSLPQHNR) is cleaved from the precursor. The interval 436–476 (SGNPFVPTDPDPNNPDTPDNPDTPDPEDPDTPNPEEPLPVQ) is disordered.

The protein belongs to the bacteroidetes fimbrillin superfamily. FimA/Mfa1 family. Structural component of the fimbrial stalk. Minor fimbriae are composed of a structural subunit, most often Mfa1, and the accessory subunits Mfa3, Mfa4 and Mfa5. Mfa1 interacts with Mfa2; this anchors the fimbrium in the membrane. Fimbrium assembly occurs by linear, head-to-tail oligomerization of fimbrial subunits. This is mediated via insertion of a C-terminal beta-strand from one subunit into a groove in the N-terminal domain of the following subunit.

It localises to the fimbrium. The protein resides in the cell outer membrane. Functionally, structural subunit of the minor fimbriae. These filamentous pili are attached to the cell surface; they mediate biofilm formation, adhesion onto host cells and onto other bacteria that are part of the oral microbiome. They play an important role in invasion of periodontal tissues and are recognized as major virulence factors. Mfa1 orthologs from different strains have highly divergent sequences, and this correlates with pathogenicity. The chain is Minor fimbrium subunit Mfa1 from Porphyromonas gingivalis (Bacteroides gingivalis).